Here is a 364-residue protein sequence, read N- to C-terminus: Putative agmatine deiminase (364 aa).

Residue Cys-355 is the Amidino-cysteine intermediate of the active site.

The protein belongs to the agmatine deiminase family.

It catalyses the reaction agmatine + H2O = N-carbamoylputrescine + NH4(+). The sequence is that of Putative agmatine deiminase from Mycoplasma capricolum subsp. capricolum (strain California kid / ATCC 27343 / NCTC 10154).